We begin with the raw amino-acid sequence, 83 residues long: Mu-theraphotoxin-Hhn2l (83 aa).

The first 21 residues, 1–21 (MKASMFLALAGLVLLFVVGYA), serve as a signal peptide directing secretion. Positions 22 to 48 (SESEEKEFPIELLSKIFAVDVFKGEER) are excised as a propeptide. 3 disulfides stabilise this stretch: cysteine 50–cysteine 65, cysteine 57–cysteine 70, and cysteine 64–cysteine 77. Leucine amide is present on leucine 81.

It belongs to the neurotoxin 10 (Hwtx-1) family. 15 (Hntx-3) subfamily. Monomer. As to expression, expressed by the venom gland.

It localises to the secreted. Lethal neurotoxin. Selectively blocks tetrodotoxin-sensitive voltage-gated sodium channels (Nav). Does not affect tetrodotoxin-resistant voltage-gated sodium channels or calcium channels. This is Mu-theraphotoxin-Hhn2l from Cyriopagopus hainanus (Chinese bird spider).